Reading from the N-terminus, the 304-residue chain is Insulin-like growth factor 1 receptor (304 aa).

Fibronectin type-III domains lie at 1–43 (ERTV…TMPA) and 49–142 (IPGP…VQAK). The Extracellular portion of the chain corresponds to 1-147 (ERTVISNLRP…YVQAKTTYEN (147 aa)). Asn115 and Asn128 each carry an N-linked (GlcNAc...) asparagine glycan. A helical membrane pass occupies residues 148 to 168 (FIHLIIALPVAVLLIVGGLVI). Topologically, residues 169–304 (MLYVFHRKRN…HMNGGRKNER (136 aa)) are cytoplasmic. A Phosphoserine; by GSK3-beta modification is found at Ser225. A Phosphoserine modification is found at Ser229. A disordered region spans residues 231–304 (ENKPPEPEEL…HMNGGRKNER (74 aa)). Positions 237–246 (PEELDLEPEN) are enriched in acidic residues. Residues 247–263 (MESVPLDPSASSSSLPL) are compositionally biased toward low complexity. Over residues 264–273 (PDRHSGHKAE) the composition is skewed to basic and acidic residues.

It belongs to the protein kinase superfamily. Tyr protein kinase family. Insulin receptor subfamily. Tetramer of 2 alpha and 2 beta chains linked by disulfide bonds. The alpha chains contribute to the formation of the ligand-binding domain, while the beta chain carries the kinase domain. Forms a hybrid receptor with INSR, the hybrid is a tetramer consisting of 1 alpha chain and 1 beta chain of INSR and 1 alpha chain and 1 beta chain of IGF1R. Interacts with ARRB1 and ARRB2. Interacts with GRB10. Interacts with RACK1. Interacts with SOCS1, SOCS2 and SOCS3. Interacts with 14-3-3 proteins. Interacts with NMD2. Interacts with MAP3K5. Interacts with STAT3. Found in a ternary complex with IGF1 and ITGAV:ITGB3 or ITGA6:ITGB4. Interacts (nascent precursor form) with ZFAND2B. Autophosphorylated on tyrosine residues in response to ligand binding. Autophosphorylation occurs in trans, i.e. one subunit of the dimeric receptor phosphorylates tyrosine residues on the other subunit. Autophosphorylation occurs in a sequential manner. While every single phosphorylation increases kinase activity, all three tyrosine residues in the kinase activation loop have to be phosphorylated for optimal activity. Can be autophosphorylated at additional tyrosine residues (in vitro). May also be phosphorylated at tyrosine residues by mTORC2. Autophosphorylated is followed by phosphorylation of juxtamembrane tyrosines and C-terminal serines. Phosphorylation of Ser-225 by GSK-3beta restrains kinase activity and promotes cell surface expression, it requires a priming phosphorylation at Ser-229. Dephosphorylated by PTPN1. Post-translationally, polyubiquitinated in the activation loop through both 'Lys-48' and 'Lys-29' linkages, promoting receptor endocytosis and subsequent degradation by the proteasome. Ubiquitination is facilitated by pre-existing phosphorylation. In terms of processing, sumoylated with SUMO1. Controlled by regulated intramembrane proteolysis (RIP). Undergoes metalloprotease-dependent constitutive ectodomain shedding to produce a membrane-anchored 52 kDa C-Terminal fragment which is further processed by presenilin gamma-secretase to yield an intracellular 50 kDa fragment.

The protein localises to the cell membrane. It carries out the reaction L-tyrosyl-[protein] + ATP = O-phospho-L-tyrosyl-[protein] + ADP + H(+). Its activity is regulated as follows. Activated by autophosphorylation at tyrosines in the kinase activation loop; phosphorylation at all three tyrosine residues is required for optimal kinase activity. Inhibited by MSC1609119A-1, BMS-754807, PQIP, benzimidazole pyridinone, isoquinolinedione, bis-azaindole, 3-cyanoquinoline, 2,4-bis-arylamino-1,3-pyrimidine, pyrrolopyrimidine, pyrrole-5-carboxaldehyde, picropodophyllin (PPP), tyrphostin derivatives. While most inhibitors bind to the ATP binding pocket, MSC1609119A-1 functions as allosteric inhibitor and binds close to the DFG motif and the activation loop. Its function is as follows. Receptor tyrosine kinase which mediates actions of insulin-like growth factor 1 (IGF1). Binds IGF1 with high affinity and IGF2 and insulin (INS) with a lower affinity. The activated IGF1R is involved in cell growth and survival control. IGF1R is crucial for tumor transformation and survival of malignant cell. Ligand binding activates the receptor kinase, leading to receptor autophosphorylation, and tyrosines phosphorylation of multiple substrates, that function as signaling adapter proteins including, the insulin-receptor substrates (IRS1/2), Shc and 14-3-3 proteins. Phosphorylation of IRSs proteins lead to the activation of two main signaling pathways: the PI3K-AKT/PKB pathway and the Ras-MAPK pathway. The result of activating the MAPK pathway is increased cellular proliferation, whereas activating the PI3K pathway inhibits apoptosis and stimulates protein synthesis. Phosphorylated IRS1 can activate the 85 kDa regulatory subunit of PI3K (PIK3R1), leading to activation of several downstream substrates, including protein AKT/PKB. AKT phosphorylation, in turn, enhances protein synthesis through mTOR activation and triggers the antiapoptotic effects of IGFIR through phosphorylation and inactivation of BAD. In parallel to PI3K-driven signaling, recruitment of Grb2/SOS by phosphorylated IRS1 or Shc leads to recruitment of Ras and activation of the ras-MAPK pathway. In addition to these two main signaling pathways IGF1R signals also through the Janus kinase/signal transducer and activator of transcription pathway (JAK/STAT). Phosphorylation of JAK proteins can lead to phosphorylation/activation of signal transducers and activators of transcription (STAT) proteins. In particular activation of STAT3, may be essential for the transforming activity of IGF1R. The JAK/STAT pathway activates gene transcription and may be responsible for the transforming activity. JNK kinases can also be activated by the IGF1R. IGF1 exerts inhibiting activities on JNK activation via phosphorylation and inhibition of MAP3K5/ASK1, which is able to directly associate with the IGF1R. When present in a hybrid receptor with INSR, binds IGF1. This chain is Insulin-like growth factor 1 receptor (IGF1R), found in Sus scrofa (Pig).